The following is a 1461-amino-acid chain: Selection and upkeep of intraepithelial T-cells protein 5 (1461 aa).

An N-terminal signal peptide occupies residues 1–24 (MGAVGIPLTAHCVVLFLLQMVALS). Residues 25-1306 (SEQFTVNGLE…CNKRNPFWKK (1282 aa)) are Extracellular-facing. One can recognise an Ig-like V-type domain in the interval 26–139 (EQFTVNGLES…FYEEHIIDVK (114 aa)). 2 cysteine pairs are disulfide-bonded: C49-C123 and C163-C217. The region spanning 142–231 (ATSSDIQILM…FVTHQEESIS (90 aa)) is the Ig-like C1-type domain. The N-linked (GlcNAc...) asparagine glycan is linked to N200. The chain crosses the membrane as a helical span at residues 1307 to 1327 (YALDLGISVFTIIVVTLIMHL). Residues 1328–1345 (KQREADQHFELNTLWSKD) are Cytoplasmic-facing. The chain crosses the membrane as a helical span at residues 1346–1366 (TSVILCVLIMFNNRLKALIYF). Topologically, residues 1367 to 1387 (RLYGFSPPGKAHKYIVNYILR) are extracellular. Residues 1388–1408 (FSHPVFCIVYSATILYMYLQI) form a helical membrane-spanning segment. Over 1409-1427 (QNKDSLFSLYNSWMVEMEM) the chain is Cytoplasmic. Residues 1428 to 1448 (VLIFLLVIFNVKNIATVLLYF) traverse the membrane as a helical segment. Residues 1449 to 1461 (DSTTLRLFFWIKG) lie on the Extracellular side of the membrane.

Belongs to the SKINT family. In terms of tissue distribution, expressed in skin and, to a lower extent, testis.

Its subcellular location is the membrane. In terms of biological role, may act by engaging a cell surface molecule on immature T-cells in the embryonic thymus. The chain is Selection and upkeep of intraepithelial T-cells protein 5 (Skint5) from Mus musculus (Mouse).